The sequence spans 194 residues: MAIKLIVGLANPGAEYAATRHNAGAWYVDLLAERLRAPLREEPKFFGYTSRITLEGEDVRLLVPTTFMNLSGKAVGTMASFYRIQPDEILVAHDELDLPPGVAKFKLGGGHGGHNGLKDIISKLGNNPNFHRLRVGIGHPGDKNKVVGFVLGKPPVSEQKLIDEAIDEAARCTELWFKEGLAKATSRLHTFKAQ.

Residue Tyr16 coordinates tRNA. Residue His21 is the Proton acceptor of the active site. TRNA-binding residues include Phe67, Asn69, and Asn115.

This sequence belongs to the PTH family. In terms of assembly, monomer.

Its subcellular location is the cytoplasm. The enzyme catalyses an N-acyl-L-alpha-aminoacyl-tRNA + H2O = an N-acyl-L-amino acid + a tRNA + H(+). Functionally, hydrolyzes ribosome-free peptidyl-tRNAs (with 1 or more amino acids incorporated), which drop off the ribosome during protein synthesis, or as a result of ribosome stalling. Catalyzes the release of premature peptidyl moieties from peptidyl-tRNA molecules trapped in stalled 50S ribosomal subunits, and thus maintains levels of free tRNAs and 50S ribosomes. The protein is Peptidyl-tRNA hydrolase of Salmonella dublin (strain CT_02021853).